Consider the following 389-residue polypeptide: WAT1-related protein At1g21890 (389 aa).

The next 10 helical transmembrane spans lie at Leu-13–Leu-33, Tyr-40–Phe-60, Ile-73–Tyr-93, Thr-102–Phe-122, Val-142–Ile-162, Trp-191–Leu-211, Leu-225–Val-245, Phe-260–Val-280, Val-287–Val-307, and Ile-312–Trp-332. EamA domains follow at residues Ala-23–Leu-150 and Trp-205–Val-331. The disordered stretch occupies residues Arg-339–Thr-361.

This sequence belongs to the drug/metabolite transporter (DMT) superfamily. Plant drug/metabolite exporter (P-DME) (TC 2.A.7.4) family.

The protein localises to the membrane. This Arabidopsis thaliana (Mouse-ear cress) protein is WAT1-related protein At1g21890.